The primary structure comprises 171 residues: Ribosome maturation factor RimM (171 aa).

One can recognise a PRC barrel domain in the interval 97–169 (DGEFYYHEII…RVDVDIMEGL (73 aa)).

This sequence belongs to the RimM family. Binds ribosomal protein uS19.

The protein localises to the cytoplasm. In terms of biological role, an accessory protein needed during the final step in the assembly of 30S ribosomal subunit, possibly for assembly of the head region. Essential for efficient processing of 16S rRNA. May be needed both before and after RbfA during the maturation of 16S rRNA. It has affinity for free ribosomal 30S subunits but not for 70S ribosomes. This Lactococcus lactis subsp. cremoris (strain SK11) protein is Ribosome maturation factor RimM.